The sequence spans 55 residues: Large ribosomal subunit protein bL33 (55 aa).

It belongs to the bacterial ribosomal protein bL33 family.

In Kocuria rhizophila (strain ATCC 9341 / DSM 348 / NBRC 103217 / DC2201), this protein is Large ribosomal subunit protein bL33.